Here is a 489-residue protein sequence, read N- to C-terminus: MSIDLNWEAATSGPDGEQLAERIRCFIHDKFQQVPLPRFIRSVNVHSFEFGSIAPELEIKDICDPFVDFYEESDSEDEDEGHEDIQSDASSDRAAADKRGMRYRHDNNGHDEHGTNHHDHLRTSQWVTGEIDGHHQSAQSPLRSPIGLGDHLNAQFRSTTPNILPGVTSNLGYHLMMGNLSGTQTPLVAVAGGGTPFGTGWPDAVMHGGSQLAGQPHGRGRGREENNNNNLDTGSPSRPSTANTNPTQLSHGQSAAGSSSNNTSNDPTVIYNDHASSTTATAHGLHEGREKQAPTSIIDQESPPSPTPHMRERRPEDFQVICRVKYAGDVKLSLTAEILLDYPMPSFVGLPLKLNITGITFDGVAVVAYIRRRAHLCFLSPEDADALLGDEEEDINHQQRQQQQQQHPYPTTNTSESINNNNPETHPPQPRRRFGSLLQQIRVDSEIGRKENGKQALKNVGKVERFVLDQVRRIFEDEFVFPSFWTFLV.

The SMP-LTD domain maps to 1 to 489 (MSIDLNWEAA…VFPSFWTFLV (489 aa)). Acidic residues predominate over residues 72–82 (ESDSEDEDEGH). Disordered stretches follow at residues 72–97 (ESDSEDEDEGHEDIQSDASSDRAAAD), 201–313 (WPDA…MRER), and 394–432 (DINHQQRQQQQQQHPYPTTNTSESINNNNPETHPPQPRR). The span at 231–249 (LDTGSPSRPSTANTNPTQL) shows a compositional bias: polar residues. 2 stretches are compositionally biased toward low complexity: residues 250 to 265 (SHGQSAAGSSSNNTSN) and 398 to 424 (QQRQQQQQQHPYPTTNTSESINNNNPE).

This sequence belongs to the MDM12 family. In terms of assembly, component of the ER-mitochondria encounter structure (ERMES) or MDM complex, composed of MMM1, MDM10, mdm12 and MDM34. An MMM1 homodimer associates with one molecule of mdm12 on each side in a pairwise head-to-tail manner, and the SMP-LTD domains of MMM1 and mdm12 generate a continuous hydrophobic tunnel for phospholipid trafficking.

The protein localises to the mitochondrion outer membrane. It localises to the endoplasmic reticulum membrane. Its function is as follows. Component of the ERMES/MDM complex, which serves as a molecular tether to connect the endoplasmic reticulum (ER) and mitochondria. Components of this complex are involved in the control of mitochondrial shape and protein biogenesis, and function in nonvesicular lipid trafficking between the ER and mitochondria. mdm12 is required for the interaction of the ER-resident membrane protein MMM1 and the outer mitochondrial membrane-resident beta-barrel protein MDM10. The mdm12-MMM1 subcomplex functions in the major beta-barrel assembly pathway that is responsible for biogenesis of all mitochondrial outer membrane beta-barrel proteins, and acts in a late step after the SAM complex. The MDM10-mdm12-MMM1 subcomplex further acts in the TOM40-specific pathway after the action of the mdm12-MMM1 complex. Essential for establishing and maintaining the structure of mitochondria and maintenance of mtDNA nucleoids. This Talaromyces marneffei (strain ATCC 18224 / CBS 334.59 / QM 7333) (Penicillium marneffei) protein is Mitochondrial distribution and morphology protein 12.